Here is a 157-residue protein sequence, read N- to C-terminus: Histone H2B.3 (157 aa).

The segment at 1-64 is disordered; it reads MAPKKEEKPA…DKKSKKKAKV (64 aa). Basic residues predominate over residues 26-42; sequence KAVKAPKKKEKKAPAKK. Residue K153 forms a Glycyl lysine isopeptide (Lys-Gly) (interchain with G-Cter in ubiquitin) linkage.

This sequence belongs to the histone H2B family. In terms of assembly, the nucleosome is a histone octamer containing two molecules each of H2A, H2B, H3 and H4 assembled in one H3-H4 heterotetramer and two H2A-H2B heterodimers. The octamer wraps approximately 147 bp of DNA. Post-translationally, monoubiquitinated to form H2BK143ub1; may give a specific tag for epigenetic transcriptional activation.

It localises to the nucleus. The protein resides in the chromosome. Its function is as follows. Core component of nucleosome. Nucleosomes wrap and compact DNA into chromatin, limiting DNA accessibility to the cellular machineries which require DNA as a template. Histones thereby play a central role in transcription regulation, DNA repair, DNA replication and chromosomal stability. DNA accessibility is regulated via a complex set of post-translational modifications of histones, also called histone code, and nucleosome remodeling. The sequence is that of Histone H2B.3 from Volvox carteri (Green alga).